We begin with the raw amino-acid sequence, 185 residues long: Ribosome-recycling factor (185 aa).

This sequence belongs to the RRF family.

Its subcellular location is the cytoplasm. Its function is as follows. Responsible for the release of ribosomes from messenger RNA at the termination of protein biosynthesis. May increase the efficiency of translation by recycling ribosomes from one round of translation to another. This chain is Ribosome-recycling factor, found in Macrococcus caseolyticus (strain JCSC5402) (Macrococcoides caseolyticum).